Consider the following 594-residue polypeptide: Bifunctional lycopene cyclase/phytoene synthase (594 aa).

Residues 1-249 (MGLDYLMVHV…VVFGIAAMHN (249 aa)) are lycopene beta-cyclase. A run of 7 helical transmembrane segments spans residues 3–23 (LDYL…LTIL), 35–55 (KIVL…SYLI), 77–97 (LEEV…YIIF), 130–150 (LGTL…YIGG), 153–173 (MYLG…WVLM), 176–196 (FLLA…TLYL), and 227–247 (IEEA…IAAM). The phytoene synthase stretch occupies residues 256–594 (YKAFISTTAM…RFKRAWLAML (339 aa)).

This sequence in the N-terminal section; belongs to the lycopene beta-cyclase family. It in the C-terminal section; belongs to the phytoene/squalene synthase family.

It localises to the membrane. The enzyme catalyses all-trans-lycopene = gamma-carotene. It carries out the reaction gamma-carotene = all-trans-beta-carotene. It catalyses the reaction 2 (2E,6E,10E)-geranylgeranyl diphosphate = 15-cis-phytoene + 2 diphosphate. Its pathway is carotenoid biosynthesis; beta-carotene biosynthesis. It functions in the pathway carotenoid biosynthesis; phytoene biosynthesis; all-trans-phytoene from geranylgeranyl diphosphate: step 1/1. In terms of biological role, bifunctional enzyme that catalyzes the reactions from geranylgeranyl diphosphate to phytoene (phytoene synthase) and lycopene to beta-carotene via the intermediate gamma-carotene (lycopene cyclase). This is Bifunctional lycopene cyclase/phytoene synthase from Arthroderma gypseum (strain ATCC MYA-4604 / CBS 118893) (Microsporum gypseum).